We begin with the raw amino-acid sequence, 985 residues long: UPF0182 protein cgR_0895 (985 aa).

The next 7 helical transmembrane spans lie at 19 to 39 (VTWI…SVGF), 63 to 83 (IVLF…AGYF), 115 to 135 (VMVL…QRSW), 176 to 196 (SMML…MGGI), 215 to 235 (TQLA…YWLD), 262 to 282 (KIIL…AIFL), and 290 to 310 (LAVV…PLML). The disordered stretch occupies residues 906–944 (AQDIEEVDGTTTTPSTDETDTDTDQPATETPTAPVSEAE). Residues 929 to 939 (DQPATETPTAP) are compositionally biased toward low complexity.

Belongs to the UPF0182 family.

It localises to the cell membrane. This Corynebacterium glutamicum (strain R) protein is UPF0182 protein cgR_0895.